The sequence spans 41 residues: Mu-conotoxin pn4c (41 aa).

Positions 1 to 24 (DQPAERMQDDISSEHHPFFDPVKR) are excised as a propeptide.

This sequence belongs to the conotoxin M superfamily. Contains 3 disulfide bonds. They are not added, since framework IV presents two different connectivities (I-V, II-III, IV-VI and I-III, II-V, IV-VI). As to expression, expressed by the venom duct.

It localises to the secreted. In terms of biological role, mu-conotoxins block voltage-gated sodium channels (Nav). Blocks reversibly sodium channels in molluskan neurons, but has no effect on sodium currents in bovine chromaffin cells or in rat brain synaptosomes. Induces paralysis in mollusks (C.retripictus). The polypeptide is Mu-conotoxin pn4c (Conus pennaceus (Feathered cone)).